Here is a 640-residue protein sequence, read N- to C-terminus: Threonine--tRNA ligase (640 aa).

Residues 1–61 (MPVVTLPDGS…DKDSHLAIIT (61 aa)) form the TGS domain. Positions 242–533 (DHRRLGKQLD…LIENHAGNMP (292 aa)) are catalytic. Zn(2+) is bound by residues cysteine 333, histidine 384, and histidine 510.

The protein belongs to the class-II aminoacyl-tRNA synthetase family. As to quaternary structure, homodimer. Requires Zn(2+) as cofactor.

The protein resides in the cytoplasm. It catalyses the reaction tRNA(Thr) + L-threonine + ATP = L-threonyl-tRNA(Thr) + AMP + diphosphate + H(+). In terms of biological role, catalyzes the attachment of threonine to tRNA(Thr) in a two-step reaction: L-threonine is first activated by ATP to form Thr-AMP and then transferred to the acceptor end of tRNA(Thr). Also edits incorrectly charged L-seryl-tRNA(Thr). The chain is Threonine--tRNA ligase from Polynucleobacter asymbioticus (strain DSM 18221 / CIP 109841 / QLW-P1DMWA-1) (Polynucleobacter necessarius subsp. asymbioticus).